The sequence spans 202 residues: HTH-type transcriptional regulator BetI (202 aa).

Residues 8–68 (PIRRRQLIDA…ATMRDITRQL (61 aa)) enclose the HTH tetR-type domain. Positions 31-50 (TIAQIARRAGVSAGIISHYF) form a DNA-binding region, H-T-H motif.

It participates in amine and polyamine biosynthesis; betaine biosynthesis via choline pathway [regulation]. Its function is as follows. Repressor involved in the biosynthesis of the osmoprotectant glycine betaine. It represses transcription of the choline transporter BetT and the genes of BetAB involved in the synthesis of glycine betaine. This is HTH-type transcriptional regulator BetI from Cronobacter sakazakii (strain ATCC BAA-894) (Enterobacter sakazakii).